Consider the following 152-residue polypeptide: Large ribosomal subunit protein uL15 (152 aa).

The segment at 1–79 (MRLNELSPPP…GRHTPAHPKV (79 aa)) is disordered. Residues 22-35 (GEGSGYGKTSGRGQ) are compositionally biased toward gly residues.

This sequence belongs to the universal ribosomal protein uL15 family. Part of the 50S ribosomal subunit.

Its function is as follows. Binds to the 23S rRNA. In Rubrobacter xylanophilus (strain DSM 9941 / JCM 11954 / NBRC 16129 / PRD-1), this protein is Large ribosomal subunit protein uL15.